We begin with the raw amino-acid sequence, 302 residues long: Glycine--tRNA ligase alpha subunit (302 aa).

The protein belongs to the class-II aminoacyl-tRNA synthetase family. Tetramer of two alpha and two beta subunits.

Its subcellular location is the cytoplasm. The catalysed reaction is tRNA(Gly) + glycine + ATP = glycyl-tRNA(Gly) + AMP + diphosphate. In Xanthomonas euvesicatoria pv. vesicatoria (strain 85-10) (Xanthomonas campestris pv. vesicatoria), this protein is Glycine--tRNA ligase alpha subunit.